The sequence spans 245 residues: Phycocyanobilin:ferredoxin oxidoreductase (245 aa).

It belongs to the HY2 family.

The catalysed reaction is (2R,3Z)-phycocyanobilin + 4 oxidized [2Fe-2S]-[ferredoxin] = biliverdin IXalpha + 4 reduced [2Fe-2S]-[ferredoxin] + 4 H(+). In terms of biological role, catalyzes the four-electron reduction of biliverdin IX-alpha (2-electron reduction at both the A and D rings); the reaction proceeds via an isolatable 2-electron intermediate, 181,182-dihydrobiliverdin. In Microcystis aeruginosa (strain NIES-843 / IAM M-2473), this protein is Phycocyanobilin:ferredoxin oxidoreductase.